The following is a 146-amino-acid chain: Globin-1 (146 aa).

The region spanning 9–146 (QLTADVKKDL…KLVAVVQAAL (138 aa)) is the Globin domain. Residue histidine 101 coordinates heme b.

It belongs to the globin family. Homodimer.

The protein resides in the cytoplasm. In Anadara inaequivalvis (Inequivalve ark), this protein is Globin-1.